The sequence spans 556 residues: Urocanate hydratase (556 aa).

Residues 53–54, Q131, 177–179, E197, 243–244, 264–268, 274–275, and Y323 contribute to the NAD(+) site; these read GG, GMG, NA, QTSAH, and YL. The active site involves C411. G493 is a binding site for NAD(+).

Belongs to the urocanase family. It depends on NAD(+) as a cofactor.

It is found in the cytoplasm. It catalyses the reaction 4-imidazolone-5-propanoate = trans-urocanate + H2O. It participates in amino-acid degradation; L-histidine degradation into L-glutamate; N-formimidoyl-L-glutamate from L-histidine: step 2/3. Catalyzes the conversion of urocanate to 4-imidazolone-5-propionate. This chain is Urocanate hydratase, found in Pseudomonas fluorescens (strain SBW25).